Reading from the N-terminus, the 267-residue chain is 3-methyl-2-oxobutanoate hydroxymethyltransferase (267 aa).

Mg(2+) contacts are provided by aspartate 46 and aspartate 85. 3-methyl-2-oxobutanoate contacts are provided by residues 46–47 (DS), aspartate 85, and lysine 115. Glutamate 117 is a binding site for Mg(2+). Glutamate 184 functions as the Proton acceptor in the catalytic mechanism.

Belongs to the PanB family. Homodecamer; pentamer of dimers. Mg(2+) serves as cofactor.

The protein localises to the cytoplasm. The enzyme catalyses 3-methyl-2-oxobutanoate + (6R)-5,10-methylene-5,6,7,8-tetrahydrofolate + H2O = 2-dehydropantoate + (6S)-5,6,7,8-tetrahydrofolate. Its pathway is cofactor biosynthesis; (R)-pantothenate biosynthesis; (R)-pantoate from 3-methyl-2-oxobutanoate: step 1/2. Functionally, catalyzes the reversible reaction in which hydroxymethyl group from 5,10-methylenetetrahydrofolate is transferred onto alpha-ketoisovalerate to form ketopantoate. This is 3-methyl-2-oxobutanoate hydroxymethyltransferase from Geobacter sulfurreducens (strain ATCC 51573 / DSM 12127 / PCA).